The sequence spans 222 residues: Ribose-5-phosphate isomerase A (222 aa).

Substrate is bound by residues 29 to 32 (TGST), 82 to 85 (DSAD), and 95 to 98 (KGGG). The active-site Proton acceptor is the Glu-104. Lys-122 serves as a coordination point for substrate.

The protein belongs to the ribose 5-phosphate isomerase family. Homodimer.

The enzyme catalyses aldehydo-D-ribose 5-phosphate = D-ribulose 5-phosphate. It participates in carbohydrate degradation; pentose phosphate pathway; D-ribose 5-phosphate from D-ribulose 5-phosphate (non-oxidative stage): step 1/1. Its function is as follows. Catalyzes the reversible conversion of ribose-5-phosphate to ribulose 5-phosphate. The protein is Ribose-5-phosphate isomerase A of Blochmanniella floridana.